We begin with the raw amino-acid sequence, 329 residues long: Cytosolic arginine sensor for mTORC1 subunit 1 (329 aa).

Serine 14 is subject to Phosphoserine. ACT domains are found at residues 72-138 (AEAT…HTLA) and 260-321 (GELW…EVLQ). Residues 111-112 (SV), glycine 274, 280-281 (IV), and 300-304 (TFNFD) each bind L-arginine.

Belongs to the GATS family. In terms of assembly, forms homodimers and heterodimers with CASTOR2. Interacts with the GATOR2 complex which is composed of MIOS, SEC13, SEH1L, WDR24 and WDR59; the interaction is negatively regulated by arginine. Interacts with TM4SF5; the interaction is positively regulated by leucine and is negatively regulated by arginine. Phosphorylation at Ser-14 by AKT1, promoting the interaction between CASTOR1 and RNF167. In terms of processing, ubiquitinated by RNF167 via 'Lys-29'-polyubiquitination, leading to its degradation, releasing the GATOR2 complex. Ubiquitination by RNF167 is promoted by phosphorylation at Ser-14 by AKT1.

It is found in the cytoplasm. The protein localises to the cytosol. Functionally, functions as an intracellular arginine sensor within the amino acid-sensing branch of the TORC1 signaling pathway. As a homodimer or a heterodimer with CASTOR2, binds and inhibits the GATOR subcomplex GATOR2 and thereby mTORC1. Binding of arginine to CASTOR1 allosterically disrupts the interaction of CASTOR1-containing dimers with GATOR2 which can in turn activate mTORC1 and the TORC1 signaling pathway. The chain is Cytosolic arginine sensor for mTORC1 subunit 1 from Pongo abelii (Sumatran orangutan).